Consider the following 458-residue polypeptide: ATP synthase subunit beta (458 aa).

Residue 148 to 155 (GGAGVGKT) coordinates ATP.

Belongs to the ATPase alpha/beta chains family. F-type ATPases have 2 components, CF(1) - the catalytic core - and CF(0) - the membrane proton channel. CF(1) has five subunits: alpha(3), beta(3), gamma(1), delta(1), epsilon(1). CF(0) has three main subunits: a(1), b(2) and c(9-12). The alpha and beta chains form an alternating ring which encloses part of the gamma chain. CF(1) is attached to CF(0) by a central stalk formed by the gamma and epsilon chains, while a peripheral stalk is formed by the delta and b chains.

It is found in the cell inner membrane. It catalyses the reaction ATP + H2O + 4 H(+)(in) = ADP + phosphate + 5 H(+)(out). Functionally, produces ATP from ADP in the presence of a proton gradient across the membrane. The catalytic sites are hosted primarily by the beta subunits. The chain is ATP synthase subunit beta from Francisella tularensis subsp. holarctica (strain FTNF002-00 / FTA).